The chain runs to 515 residues: Chromosomal replication initiator protein DnaA (515 aa).

Residues 1 to 89 (MVADQAVLSS…LLAISIDANL (89 aa)) form a domain I, interacts with DnaA modulators region. The domain II stretch occupies residues 89-172 (LQPPRTPSSE…APPSTSAETS (84 aa)). Disordered stretches follow at residues 90–130 (QPPR…SRRA) and 142–171 (PPADVVPAANAAPNGNGKPTPAPPSTSAET). 2 stretches are compositionally biased toward low complexity: residues 102-114 (SSLAGGPSGAAAP) and 143-160 (PADVVPAANAAPNGNGKP). The interval 173 to 389 (RLNDRYHFET…GALIRVTAFA (217 aa)) is domain III, AAA+ region. Gly-217, Gly-219, Lys-220, and Thr-221 together coordinate ATP. The domain IV, binds dsDNA stretch occupies residues 390–515 (SLNRQTVDIE…NEIKRKQRGA (126 aa)).

The protein belongs to the DnaA family. As to quaternary structure, oligomerizes as a right-handed, spiral filament on DNA at oriC.

It localises to the cytoplasm. In terms of biological role, plays an essential role in the initiation and regulation of chromosomal replication. ATP-DnaA binds to the origin of replication (oriC) to initiate formation of the DNA replication initiation complex once per cell cycle. Binds the DnaA box (a 9 base pair repeat at the origin) and separates the double-stranded (ds)DNA. Forms a right-handed helical filament on oriC DNA; dsDNA binds to the exterior of the filament while single-stranded (ss)DNA is stabiized in the filament's interior. The ATP-DnaA-oriC complex binds and stabilizes one strand of the AT-rich DNA unwinding element (DUE), permitting loading of DNA polymerase. After initiation quickly degrades to an ADP-DnaA complex that is not apt for DNA replication. Binds acidic phospholipids. The polypeptide is Chromosomal replication initiator protein DnaA (Micrococcus luteus (strain ATCC 4698 / DSM 20030 / JCM 1464 / CCM 169 / CCUG 5858 / IAM 1056 / NBRC 3333 / NCIMB 9278 / NCTC 2665 / VKM Ac-2230) (Micrococcus lysodeikticus)).